A 138-amino-acid chain; its full sequence is Transcription antitermination protein NusB (138 aa).

Belongs to the NusB family.

In terms of biological role, involved in transcription antitermination. Required for transcription of ribosomal RNA (rRNA) genes. Binds specifically to the boxA antiterminator sequence of the ribosomal RNA (rrn) operons. The chain is Transcription antitermination protein NusB from Serratia proteamaculans (strain 568).